The primary structure comprises 428 residues: Ribosomal RNA small subunit methyltransferase B (428 aa).

Residues 253–259, Asp276, Asp302, and Asp321 contribute to the S-adenosyl-L-methionine site; that span reads CAAPGGK. Residue Cys374 is the Nucleophile of the active site.

It belongs to the class I-like SAM-binding methyltransferase superfamily. RsmB/NOP family.

The protein resides in the cytoplasm. The enzyme catalyses cytidine(967) in 16S rRNA + S-adenosyl-L-methionine = 5-methylcytidine(967) in 16S rRNA + S-adenosyl-L-homocysteine + H(+). Specifically methylates the cytosine at position 967 (m5C967) of 16S rRNA. The sequence is that of Ribosomal RNA small subunit methyltransferase B from Enterobacter sp. (strain 638).